We begin with the raw amino-acid sequence, 448 residues long: Clusterin (448 aa).

Positions M1 to G21 are cleaved as a signal peptide. Positions K77–K80 match the Nuclear localization signal motif. 5 cysteine pairs are disulfide-bonded: C101/C312, C112/C304, C115/C301, C120/C294, and C128/C284. A glycan (N-linked (GlcNAc...) asparagine) is linked at N102. Phosphoserine is present on S132. N-linked (GlcNAc...) asparagine glycans are attached at residues N144, N290, N327, N353, and N373. At S395 the chain carries Phosphoserine. The Nuclear localization signal motif lies at R442–R446.

Belongs to the clusterin family. Antiparallel disulfide-linked heterodimer of an alpha chain and a beta chain. Self-associates and forms higher oligomers. Interacts with a broad range of misfolded proteins, including APP, APOC2 and LYZ. Slightly acidic pH promotes interaction with misfolded proteins. Forms high-molecular weight oligomers upon interaction with misfolded proteins. Interacts with APOA1, LRP2, CLUAP1 and PON1. Interacts with the complement membrane attack complex. Interacts (via alpha chain) with XRCC6. Interacts with SYVN1, COMMD1, BTRC, CUL1 and with ubiquitin and SCF (SKP1-CUL1-F-box protein) E3 ubiquitin-protein ligase complexes. Interacts (via alpha chain) with BAX in stressed cells, where BAX undergoes a conformation change leading to association with the mitochondrial membrane. Does not interact with BAX in unstressed cells. Found in a complex with LTF, CLU, EPPIN and SEMG1. Interacts (immaturely glycosylated pre-secreted form) with HSPA5; this interaction promotes CLU stability and facilitates stress-induced CLU retrotranslocation from the secretory pathway to the mitochondria, thereby reducing stress-induced apoptosis by stabilizing mitochondrial membrane integrity. Interacts with BCL2L1; this interaction releases and activates BAX and promotes cell death. Interacts with TGFBR2 and ACVR1. Interacts (secreted form) with STMN3; this interaction may act as an important modulator during neuronal differentiation. Interacts with VLDLR and LRP8. In terms of processing, proteolytically cleaved on its way through the secretory system, probably within the Golgi lumen. Proteolytic cleavage is not necessary for its chaperone activity. All non-secreted forms are not proteolytically cleaved. Chaperone activity of uncleaved forms is dependent on a non-reducing environment. Polyubiquitinated, leading to proteasomal degradation. Under cellular stress, the intracellular level of cleaved form is reduced due to proteasomal degradation. Post-translationally, extensively glycosylated with sulfated N-linked carbohydrates. About 30% of the protein mass is comprised of complex N-linked carbohydrate. Endoplasmic reticulum (ER) stress induces changes in glycosylation status and increases level of hypoglycosylated forms. Core carbohydrates are essential for chaperone activity. Non-secreted forms are hypoglycosylated or unglycosylated. As to expression, most abundant in stomach, liver, brain, and testis, with intermediate levels in heart, ovary and kidney.

Its subcellular location is the secreted. It is found in the nucleus. The protein resides in the cytoplasm. It localises to the mitochondrion membrane. The protein localises to the cytosol. Its subcellular location is the microsome. It is found in the endoplasmic reticulum. The protein resides in the mitochondrion. It localises to the perinuclear region. The protein localises to the cytoplasmic vesicle. Its subcellular location is the secretory vesicle. It is found in the chromaffin granule. Its function is as follows. Functions as extracellular chaperone that prevents aggregation of non native proteins. Prevents stress-induced aggregation of blood plasma proteins. Inhibits formation of amyloid fibrils by APP, APOC2, B2M, CALCA, CSN3, SNCA and aggregation-prone LYZ variants (in vitro). Does not require ATP. Maintains partially unfolded proteins in a state appropriate for subsequent refolding by other chaperones, such as HSPA8/HSC70. Does not refold proteins by itself. Binding to cell surface receptors triggers internalization of the chaperone-client complex and subsequent lysosomal or proteasomal degradation. When secreted, protects cells against apoptosis and against cytolysis by complement: inhibits assembly of the complement membrane attack complex (MAC) by preventing polymerization of C9 pore component of the MAC complex. Intracellular forms interact with ubiquitin and SCF (SKP1-CUL1-F-box protein) E3 ubiquitin-protein ligase complexes and promote the ubiquitination and subsequent proteasomal degradation of target proteins. Promotes proteasomal degradation of COMMD1 and IKBKB. Modulates NF-kappa-B transcriptional activity. Following stress, promotes apoptosis. Inhibits apoptosis when associated with the mitochondrial membrane by interference with BAX-dependent release of cytochrome c into the cytoplasm. Plays a role in the regulation of cell proliferation. Following ER stress, suppresses stress-induced apoptosis by stabilizing mitochondrial membrane integrity through interaction with HSPA5. When secreted, does not affect caspase or BAX-mediated intrinsic apoptosis and TNF-induced NF-kappa-B-activity. When secreted, acts as an important modulator during neuronal differentiation through interaction with STMN3. Plays a role in the clearance of immune complexes that arise during cell injury. In Mus musculus (Mouse), this protein is Clusterin.